Reading from the N-terminus, the 273-residue chain is Hemin import ATP-binding protein HmuV (273 aa).

Residues 2–256 form the ABC transporter domain; it reads LTAHHLDVAR…AHIAQCYGFA (255 aa). 34 to 41 is a binding site for ATP; it reads GRNGAGKS.

The protein belongs to the ABC transporter superfamily. Heme (hemin) importer (TC 3.A.1.14.5) family. In terms of assembly, the complex is composed of two ATP-binding proteins (HmuV), two transmembrane proteins (HmuU) and a solute-binding protein (HmuT).

It localises to the cell inner membrane. Part of the ABC transporter complex HmuTUV involved in hemin import. Responsible for energy coupling to the transport system. This Burkholderia lata (strain ATCC 17760 / DSM 23089 / LMG 22485 / NCIMB 9086 / R18194 / 383) protein is Hemin import ATP-binding protein HmuV.